Here is a 404-residue protein sequence, read N- to C-terminus: Acetylornithine aminotransferase (404 aa).

Residues 113-114 (GT) and Phe139 contribute to the pyridoxal 5'-phosphate site. Arg142 serves as a coordination point for N(2)-acetyl-L-ornithine. 224–227 (DEVQ) lines the pyridoxal 5'-phosphate pocket. The residue at position 253 (Lys253) is an N6-(pyridoxal phosphate)lysine. A N(2)-acetyl-L-ornithine-binding site is contributed by Ser281. Residue Thr282 coordinates pyridoxal 5'-phosphate.

It belongs to the class-III pyridoxal-phosphate-dependent aminotransferase family. ArgD subfamily. Homodimer. Pyridoxal 5'-phosphate serves as cofactor.

It localises to the cytoplasm. It catalyses the reaction N(2)-acetyl-L-ornithine + 2-oxoglutarate = N-acetyl-L-glutamate 5-semialdehyde + L-glutamate. The protein operates within amino-acid biosynthesis; L-arginine biosynthesis; N(2)-acetyl-L-ornithine from L-glutamate: step 4/4. The chain is Acetylornithine aminotransferase from Mycobacterium leprae (strain TN).